The primary structure comprises 261 residues: Kallikrein 1-related peptidase b9 (261 aa).

Positions 1–18 (MRFLILFLALSLGGIDAA) are cleaved as a signal peptide. A propeptide spans 19–24 (PPVHSR) (activation peptide). The region spanning 25–258 (IVGGFKCEKN…FTSWIKDTMA (234 aa)) is the Peptidase S1 domain. 5 disulfides stabilise this stretch: cysteine 31-cysteine 173, cysteine 50-cysteine 66, cysteine 152-cysteine 219, cysteine 184-cysteine 198, and cysteine 209-cysteine 234. The Charge relay system role is filled by histidine 65. A glycan (N-linked (GlcNAc...) asparagine) is linked at asparagine 102. The active-site Charge relay system is aspartate 120. Serine 213 serves as the catalytic Charge relay system.

Belongs to the peptidase S1 family. Kallikrein subfamily.

It carries out the reaction Preferential cleavage of Arg-|-Xaa bonds in small molecule substrates. Highly selective action to release kallidin (lysyl-bradykinin) from kininogen involves hydrolysis of Met-|-Xaa or Leu-|-Xaa.. Glandular kallikreins cleave Met-Lys and Arg-Ser bonds in kininogen to release Lys-bradykinin. The chain is Kallikrein 1-related peptidase b9 (Klk1b9) from Mus musculus (Mouse).